A 273-amino-acid polypeptide reads, in one-letter code: Polyamine aminopropyltransferase (273 aa).

The PABS domain occupies 5–238 (ENWFSERYSD…GFWSFTVASP (234 aa)). Gln34 lines the S-methyl-5'-thioadenosine pocket. Spermidine is bound by residues His65 and Asp90. S-methyl-5'-thioadenosine-binding positions include Glu109 and 140–141 (DG). Catalysis depends on Asp158, which acts as the Proton acceptor. 158-161 (DSTD) contacts spermidine. Pro165 contacts S-methyl-5'-thioadenosine.

The protein belongs to the spermidine/spermine synthase family. In terms of assembly, homodimer or homotetramer.

It localises to the cytoplasm. It carries out the reaction S-adenosyl 3-(methylsulfanyl)propylamine + putrescine = S-methyl-5'-thioadenosine + spermidine + H(+). It participates in amine and polyamine biosynthesis; spermidine biosynthesis; spermidine from putrescine: step 1/1. Functionally, catalyzes the irreversible transfer of a propylamine group from the amino donor S-adenosylmethioninamine (decarboxy-AdoMet) to putrescine (1,4-diaminobutane) to yield spermidine. The chain is Polyamine aminopropyltransferase from Thermoplasma acidophilum (strain ATCC 25905 / DSM 1728 / JCM 9062 / NBRC 15155 / AMRC-C165).